A 365-amino-acid chain; its full sequence is Cobalt-precorrin-5B C(1)-methyltransferase (365 aa).

The protein belongs to the CbiD family.

The catalysed reaction is Co-precorrin-5B + S-adenosyl-L-methionine = Co-precorrin-6A + S-adenosyl-L-homocysteine. Its pathway is cofactor biosynthesis; adenosylcobalamin biosynthesis; cob(II)yrinate a,c-diamide from sirohydrochlorin (anaerobic route): step 6/10. Catalyzes the methylation of C-1 in cobalt-precorrin-5B to form cobalt-precorrin-6A. The protein is Cobalt-precorrin-5B C(1)-methyltransferase of Methanococcus maripaludis (strain C5 / ATCC BAA-1333).